A 273-amino-acid polypeptide reads, in one-letter code: Putative tyrosine-protein phosphatase H16_A0669 (273 aa).

The first 15 residues, 1-15, serve as a signal peptide directing secretion; it reads MIKWLQRAGCLSAHA. The active-site Phosphocysteine intermediate is Cys-169.

The protein belongs to the protein-tyrosine phosphatase family.

It catalyses the reaction O-phospho-L-tyrosyl-[protein] + H2O = L-tyrosyl-[protein] + phosphate. The chain is Putative tyrosine-protein phosphatase H16_A0669 from Cupriavidus necator (strain ATCC 17699 / DSM 428 / KCTC 22496 / NCIMB 10442 / H16 / Stanier 337) (Ralstonia eutropha).